The primary structure comprises 98 residues: Large ribosomal subunit protein uL23 (98 aa).

It belongs to the universal ribosomal protein uL23 family. In terms of assembly, part of the 50S ribosomal subunit. Contacts protein L29, and trigger factor when it is bound to the ribosome.

Functionally, one of the early assembly proteins it binds 23S rRNA. One of the proteins that surrounds the polypeptide exit tunnel on the outside of the ribosome. Forms the main docking site for trigger factor binding to the ribosome. The chain is Large ribosomal subunit protein uL23 from Rickettsia felis (strain ATCC VR-1525 / URRWXCal2) (Rickettsia azadi).